A 568-amino-acid chain; its full sequence is Hexose transporter 1 (568 aa).

Over 1 to 32 the chain is Cytoplasmic; sequence MATEEMREKSLKREAESLWDIPPESYASKACS. The helical transmembrane segment at 33–53 threads the bilayer; sequence CMGTAAQLVMVAVLGSFQFGF. Over 54–86 the chain is Extracellular; sequence NLSALNTSKAFIILDFGWCKDENGGHYSDCDTG. Residues cysteine 72 and cysteine 83 are joined by a disulfide bond. The chain crosses the membrane as a helical span at residues 87–107; that stretch reads LVYGSLINTAVFLGACVGCLL. Over 108 to 119 the chain is Cytoplasmic; sequence GGRLTDFGRRAS. A helical membrane pass occupies residues 120–140; sequence LIFTHCVCTLGCILSAAAEGF. Topologically, residues 141–142 are extracellular; it reads PT. The chain crosses the membrane as a helical span at residues 143 to 163; that stretch reads LLIARLVVGVAVGMFTVCVPM. At 164 to 182 the chain is on the cytoplasmic side; sequence YLSEVTPDDRRGYFGTFHQ. Glutamine 182 lines the alpha-D-glucose pocket. Glutamine 182 provides a ligand contact to beta-D-glucose. A helical transmembrane segment spans residues 183-203; it reads LFITLGIFFGTLLGLAFGNAP. Over 204–220 the chain is Extracellular; the sequence is AGDEVYEVSTFQQAWWR. The chain crosses the membrane as a helical span at residues 221–241; the sequence is VMLGLPAVVSLLAIWLLWFVF. At 242 to 306 the chain is on the cytoplasmic side; the sequence is PFETPQYMVE…KAIVHPTYRS (65 aa). The chain crosses the membrane as a helical span at residues 307–327; that stretch reads VILLACLLSIMQQFTGINVLV. Residues glutamine 318, glutamine 319, and asparagine 324 each coordinate alpha-D-glucose. Residue glutamine 318 coordinates beta-D-glucose. Asparagine 324 is a binding site for beta-D-glucose. The Extracellular segment spans residues 328-345; sequence ANSNNLYSSLKLPQDAVT. Residues 346–366 traverse the membrane as a helical segment; sequence GLTVGFTALNVFLTVITIPLV. A beta-D-glucose-binding site is contributed by asparagine 355. The Cytoplasmic segment spans residues 367–374; it reads DRLGRRTL. Residues 375–395 form a helical membrane-spanning segment; that stretch reads LLFSEAVMFVAMGIAFVANLV. The Extracellular segment spans residues 396 to 406; that stretch reads DQSNTAVQWVT. Residues 407–427 form a helical membrane-spanning segment; it reads VACVYVFIVGFAVGYGPVLWI. Tryptophan 426 is a binding site for alpha-D-glucose. The Cytoplasmic segment spans residues 428–443; sequence YIHEIFPPEIKQGAAS. Residues 444 to 464 traverse the membrane as a helical segment; it reads LASALNWVATVAIVLPSDFLL. Residues 465-469 are Extracellular-facing; that stretch reads KQGFS. Residues 470–490 traverse the membrane as a helical segment; sequence VFVGICTVALAIIFVVTFIFV. Residues 491 to 568 lie on the Cytoplasmic side of the membrane; it reads KETKGLSIEE…DDLTKGTEVV (78 aa).

Belongs to the major facilitator superfamily. Sugar transporter (TC 2.A.1.1) family. In terms of assembly, homodimer.

Its subcellular location is the cell membrane. It carries out the reaction D-glucose(out) = D-glucose(in). It catalyses the reaction D-fructose(out) = D-fructose(in). The catalysed reaction is D-galactose(in) = D-galactose(out). The enzyme catalyses D-mannose(out) = D-mannose(in). It carries out the reaction D-glucosamine(out) = D-glucosamine(in). It catalyses the reaction D-xylose(out) = D-xylose(in). Its activity is regulated as follows. Inhibited by cytochalasin B. Sodium-independent facilitative hexose transporter. Can transport D-glucose and D-mannose with high affinity, and D-fructose and D-galactose with low affinity. Can transport D-xylose and D-glucosamine. This chain is Hexose transporter 1, found in Toxoplasma gondii.